A 180-amino-acid polypeptide reads, in one-letter code: Hypoxanthine-guanine phosphoribosyltransferase (180 aa).

Residues Lys-43 and Gly-44 each coordinate diphosphate. Mg(2+)-binding residues include Glu-99 and Asp-100. Asp-103 functions as the Proton acceptor in the catalytic mechanism. GMP-binding positions include Lys-131, Phe-152–Ile-153, and Asp-159. Position 165 (Arg-165) interacts with diphosphate.

This sequence belongs to the purine/pyrimidine phosphoribosyltransferase family. Requires Mg(2+) as cofactor.

It is found in the cytoplasm. It carries out the reaction IMP + diphosphate = hypoxanthine + 5-phospho-alpha-D-ribose 1-diphosphate. The enzyme catalyses GMP + diphosphate = guanine + 5-phospho-alpha-D-ribose 1-diphosphate. The protein operates within purine metabolism; IMP biosynthesis via salvage pathway; IMP from hypoxanthine: step 1/1. It functions in the pathway purine metabolism; GMP biosynthesis via salvage pathway; GMP from guanine: step 1/1. In terms of biological role, purine salvage pathway enzyme that catalyzes the transfer of the ribosyl-5-phosphate group from 5-phospho-alpha-D-ribose 1-diphosphate (PRPP) to the N9 position of the 6-oxopurines hypoxanthine and guanine to form the corresponding ribonucleotides IMP (inosine 5'-monophosphate) and GMP (guanosine 5'-monophosphate), with the release of PPi. The polypeptide is Hypoxanthine-guanine phosphoribosyltransferase (hpt) (Streptococcus pyogenes serotype M3 (strain ATCC BAA-595 / MGAS315)).